Consider the following 446-residue polypeptide: B3 domain-containing protein REM12 (446 aa).

The segment at 1–46 is disordered; it reads MVLNSSDLGPSRCDIRDLPAPSSTNDQGKTELARKKKVKRSNTEIE. 2 DNA-binding regions (TF-B3) span residues 56-153 and 193-289; these read CFVA…FCST and FMTL…VNTQ. Positions 295 to 334 are disordered; that stretch reads SQQGECSRDSEKESSICAEPSRGNKKWKATNNRKERRDSS. A DNA-binding region (TF-B3 3) is located at residues 341 to 435; it reads YVTLTLTPED…TTPVFKFCSN (95 aa).

It localises to the nucleus. This chain is B3 domain-containing protein REM12 (REM12), found in Arabidopsis thaliana (Mouse-ear cress).